The chain runs to 176 residues: NAD(P)H-quinone oxidoreductase subunit 6, chloroplastic (176 aa).

The next 5 membrane-spanning stretches (helical) occupy residues 10–30 (FLLV…VLLT), 32–52 (PIYS…FYIL), 61–81 (AQLL…VMFM), 92–112 (LWTI…VSLI), and 152–172 (FFLP…GAIA).

It belongs to the complex I subunit 6 family. As to quaternary structure, NDH is composed of at least 16 different subunits, 5 of which are encoded in the nucleus.

Its subcellular location is the plastid. It is found in the chloroplast thylakoid membrane. The enzyme catalyses a plastoquinone + NADH + (n+1) H(+)(in) = a plastoquinol + NAD(+) + n H(+)(out). It catalyses the reaction a plastoquinone + NADPH + (n+1) H(+)(in) = a plastoquinol + NADP(+) + n H(+)(out). NDH shuttles electrons from NAD(P)H:plastoquinone, via FMN and iron-sulfur (Fe-S) centers, to quinones in the photosynthetic chain and possibly in a chloroplast respiratory chain. The immediate electron acceptor for the enzyme in this species is believed to be plastoquinone. Couples the redox reaction to proton translocation, and thus conserves the redox energy in a proton gradient. This is NAD(P)H-quinone oxidoreductase subunit 6, chloroplastic (ndhG) from Gossypium hirsutum (Upland cotton).